An 823-amino-acid chain; its full sequence is Nuclear pore complex protein Nup93-1 (823 aa).

This sequence belongs to the nucleoporin interacting component (NIC) family. As to quaternary structure, part of the nuclear pore complex (NPC). Interacts with msk (via C-terminus); this association might be facilitated by Nup75. Interacts with Mad (preferentially when phosphorylated). Interacts with Nup154 (via N-terminus). Interacts with the Polycomb group (PcG) proteins Pc and E(z).

The protein localises to the nucleus membrane. It localises to the nucleus. The protein resides in the nuclear pore complex. Its subcellular location is the nucleoplasm. In terms of biological role, required for nuclear pore complex assembly, maintenance and function. Required for nuclear import of phosphorylated Mad via importin msk. Has no role in classical nuclear localization signal (cNLS)-dependent nuclear import via importin-beta. Mediates the association between the nuclear pore complex and a subclass of silenced regions bound by Polycomb group (PcG) proteins, enables long-range interactions between Polycomb loci and contributes to repression of polycomb targets. Together with Nup62 and Nup154, contributes to karyosome morphology and chromatin organization including attachment to the nuclear envelope in oocytes and nurse cells. This Drosophila melanogaster (Fruit fly) protein is Nuclear pore complex protein Nup93-1.